A 433-amino-acid chain; its full sequence is Enolase (433 aa).

Gln-167 provides a ligand contact to (2R)-2-phosphoglycerate. The Proton donor role is filled by Glu-209. Residues Asp-246, Glu-291, and Asp-318 each contribute to the Mg(2+) site. (2R)-2-phosphoglycerate contacts are provided by Lys-343, Arg-372, Ser-373, and Lys-394. The active-site Proton acceptor is the Lys-343.

This sequence belongs to the enolase family. As to quaternary structure, component of the RNA degradosome, a multiprotein complex involved in RNA processing and mRNA degradation. Mg(2+) serves as cofactor.

The protein localises to the cytoplasm. It localises to the secreted. The protein resides in the cell surface. It catalyses the reaction (2R)-2-phosphoglycerate = phosphoenolpyruvate + H2O. The protein operates within carbohydrate degradation; glycolysis; pyruvate from D-glyceraldehyde 3-phosphate: step 4/5. In terms of biological role, catalyzes the reversible conversion of 2-phosphoglycerate (2-PG) into phosphoenolpyruvate (PEP). It is essential for the degradation of carbohydrates via glycolysis. The protein is Enolase of Hamiltonella defensa subsp. Acyrthosiphon pisum (strain 5AT).